The chain runs to 150 residues: MFLFNILVLHGPNLNLLGLREPGIYGSVTLDNINRLLKQEAEAIGVKISISQSNHEGVLVDLIHSSSEQHQGILINAGAYTHTSVAIRDAISGINIPTVEVHLSNIYSREEFRHHSFIAPVAIGQISGFGSQSYLLGLKAIVNYLKNRGD.

The active-site Proton acceptor is Y25. Substrate contacts are provided by N76, H82, and D89. H102 acts as the Proton donor in catalysis. Substrate-binding positions include 103-104 (LS) and R113.

It belongs to the type-II 3-dehydroquinase family. Homododecamer.

The catalysed reaction is 3-dehydroquinate = 3-dehydroshikimate + H2O. It functions in the pathway metabolic intermediate biosynthesis; chorismate biosynthesis; chorismate from D-erythrose 4-phosphate and phosphoenolpyruvate: step 3/7. In terms of biological role, catalyzes a trans-dehydration via an enolate intermediate. In Trichodesmium erythraeum (strain IMS101), this protein is 3-dehydroquinate dehydratase.